The primary structure comprises 830 residues: uncharacterized protein (830 aa).

The segment covering 1-12 has biased composition (basic and acidic residues); that stretch reads MEKASKNKESGV. The interval 1-61 is disordered; that stretch reads MEKASKNKES…SIKSKNKKKT (61 aa). Residues 15–25 are compositionally biased toward polar residues; sequence ANNSFLQNFGV. Residues 249 to 433 form the Helicase ATP-binding domain; the sequence is TVSKSSASGG…YSLVKFLHIN (185 aa). 262 to 269 contributes to the ATP binding site; it reads DDMGLGKT. Residues 384-387 carry the DEAH box motif; that stretch reads DEAH. The region spanning 662-816 is the Helicase C-terminal domain; sequence EEDDTVRGLR…KSVFTSKKLT (155 aa). Ser712 carries the post-translational modification Phosphoserine.

This sequence belongs to the SNF2/RAD54 helicase family.

The protein resides in the nucleus. This is an uncharacterized protein from Schizosaccharomyces pombe (strain 972 / ATCC 24843) (Fission yeast).